Consider the following 282-residue polypeptide: Nudix hydrolase 7 (282 aa).

A Nudix hydrolase domain is found at 101 to 233 (SHVVGAGALV…KNEMFKFMAN (133 aa)). The short motif at 139-160 (GVINEGEDIWTGVAREVEEETG) is the Nudix box element. Mg(2+) contacts are provided by glutamate 154 and glutamate 158.

The protein belongs to the Nudix hydrolase family. In terms of assembly, homodimer. Interacts with RACK1A, GG1 and GG2. Requires Mg(2+) as cofactor. As to expression, expressed in stems, leaves, roots, flowers and siliques.

Its subcellular location is the nucleus. The protein resides in the cytoplasm. It is found in the cell membrane. It carries out the reaction ADP-D-ribose + H2O = D-ribose 5-phosphate + AMP + 2 H(+). The enzyme catalyses NAD(+) + H2O = beta-nicotinamide D-ribonucleotide + AMP + 2 H(+). It catalyses the reaction NADH + H2O = reduced beta-nicotinamide D-ribonucleotide + AMP + 2 H(+). With respect to regulation, not inhibited by fluoride. In terms of biological role, mediates the hydrolysis of some nucleoside diphosphate derivatives. Can use both NADH and ADP-ribose as substrates, but not 8-oxo-dGTP, cyclic ADP-ribose, GDP-mannose, UDP-glucose, ATP, or GTP. Exerts negative control of EDS1 signaling. The sequence is that of Nudix hydrolase 7 (NUDT7) from Arabidopsis thaliana (Mouse-ear cress).